The primary structure comprises 92 residues: Large ribosomal subunit protein eL31 (92 aa).

Belongs to the eukaryotic ribosomal protein eL31 family.

In Haloquadratum walsbyi (strain DSM 16790 / HBSQ001), this protein is Large ribosomal subunit protein eL31.